Here is a 725-residue protein sequence, read N- to C-terminus: A-agglutinin anchorage subunit (725 aa).

Positions M1–A24 are cleaved as a signal peptide. A run of 19 repeats spans residues V53 to T149, T182 to S188, T189 to S195, T196 to S202, T203 to S209, T210 to S216, T217 to S223, T224 to S230, T231 to L237, T238 to S244, T245 to S251, T252 to S258, T259 to S265, T266 to S272, T273 to S279, K280 to S286, T287 to S293, T294 to L300, and T301 to L307. The 2 X approximate repeats stretch occupies residues V53 to T493. 2 disordered regions span residues P168 to S318 and S335 to M363. Residues T182–L307 form an 18 X approximate tandem repeats, Ser/Thr-rich region. The stretch at M395–T493 is one 1-2 repeat. Residue G699 is the site of GPI-anchor amidated glycine attachment. A propeptide spans S700–S725 (removed in mature form).

In terms of assembly, heterodimer; disulfide-linked. Post-translationally, extensively O-glycosylated by PMT1 and PMT2. The GPI-anchor is attached to the protein in the endoplasmic reticulum and serves to target the protein to the cell surface. There, the glucosamine-inositol phospholipid moiety is cleaved off and the GPI-modified mannoprotein is covalently attached via its lipidless GPI glycan remnant to the 1,6-beta-glucan of the outer cell wall layer.

It is found in the secreted. The protein resides in the cell wall. It localises to the membrane. Functionally, cell wall anchoring subunit of the a-agglutinin heterodimer. S.cerevisiae a and alpha cells express the complementary cell surface glycoproteins a-agglutinin and alpha-agglutinin, respectively, which interact with one another to promote cellular aggregation during mating. The chain is A-agglutinin anchorage subunit (AGA1) from Saccharomyces cerevisiae (strain ATCC 204508 / S288c) (Baker's yeast).